The primary structure comprises 53 residues: uncharacterized protein (53 aa).

The segment at 34-53 is disordered; sequence RKEKGKRHAAPLSLMGVHKR.

This is an uncharacterized protein from Treponema pallidum (strain Nichols).